The sequence spans 546 residues: Chaperonin GroEL 2 (546 aa).

Residues 30-33, K51, 87-91, G415, 479-481, and D495 contribute to the ATP site; these read TLGP, DGTTT, and NAA. The disordered stretch occupies residues 526 to 546; sequence KEDAPMPGGMPGGMGGMGMDM. The segment covering 534-546 has biased composition (gly residues); that stretch reads GMPGGMGGMGMDM.

The protein belongs to the chaperonin (HSP60) family. As to quaternary structure, forms a cylinder of 14 subunits composed of two heptameric rings stacked back-to-back. Interacts with the co-chaperonin GroES.

It is found in the cytoplasm. The enzyme catalyses ATP + H2O + a folded polypeptide = ADP + phosphate + an unfolded polypeptide.. Together with its co-chaperonin GroES, plays an essential role in assisting protein folding. The GroEL-GroES system forms a nano-cage that allows encapsulation of the non-native substrate proteins and provides a physical environment optimized to promote and accelerate protein folding. This Burkholderia lata (strain ATCC 17760 / DSM 23089 / LMG 22485 / NCIMB 9086 / R18194 / 383) protein is Chaperonin GroEL 2.